Here is a 344-residue protein sequence, read N- to C-terminus: F-box protein HRT3 (344 aa).

The TPR repeat unit spans residues 14–47; it reads AIAIWEKGVLKEKDGSMSDAINFYRSALKIHDNV. In terms of domain architecture, F-box spans 98 to 148; that stretch reads WILEILPDDILLRIIKKVILMSGESWVNLSMTCSTFSKLCFHDSVPFKTFA.

In terms of assembly, interacts with SKP1. Component of the probable SCF(HRT3) complex containing CDC53, SKP1, RBX1 and HRT3.

It participates in protein modification; protein ubiquitination. Functionally, substrate recognition component of a SCF (SKP1-CUL1-F-box protein) E3 ubiquitin-protein ligase complex which mediates the ubiquitination and subsequent proteasomal degradation of target proteins. Probably recognizes and binds to phosphorylated target proteins. The protein is F-box protein HRT3 (HRT3) of Saccharomyces cerevisiae (strain ATCC 204508 / S288c) (Baker's yeast).